Consider the following 479-residue polypeptide: UDP-N-acetylmuramate--L-alanine ligase (479 aa).

ATP is bound at residue 114-120 (GTHGKTT).

Belongs to the MurCDEF family.

It is found in the cytoplasm. It carries out the reaction UDP-N-acetyl-alpha-D-muramate + L-alanine + ATP = UDP-N-acetyl-alpha-D-muramoyl-L-alanine + ADP + phosphate + H(+). The protein operates within cell wall biogenesis; peptidoglycan biosynthesis. Its function is as follows. Cell wall formation. This is UDP-N-acetylmuramate--L-alanine ligase from Pelodictyon phaeoclathratiforme (strain DSM 5477 / BU-1).